Consider the following 427-residue polypeptide: Peptidyl-prolyl cis-trans isomerase sig-7 (427 aa).

The 156-residue stretch at 6–161 (ETTLGDLIID…KDIRISHTIV (156 aa)) folds into the PPIase cyclophilin-type domain. A coiled-coil region spans residues 195–227 (DEKEDEDEGKTAEEIAEELQQREMAEQAQILEM). One can recognise an RRM domain in the interval 241 to 319 (NVLFVCKLNP…RRIHVDFSQS (79 aa)). Over residues 322–334 (QNYKYKPKSQQQE) the composition is skewed to polar residues. Residues 322–427 (QNYKYKPKSQ…RSPDRRRDRR (106 aa)) form a disordered region. Residues 351–370 (SHQRSPSPRRRRSPSPKKDK) are compositionally biased toward basic residues. Residues 384–427 (SSDNHRDRDRSYRDNNRDRRDNHRDSDRDRRRHDRSPDRRRDRR) show a composition bias toward basic and acidic residues.

The protein belongs to the cyclophilin-type PPIase family. PPIL4 subfamily. In terms of assembly, interacts with ama-1, the catalytic subunit of the RNA polymerase II (RNA pol II) complex. In terms of tissue distribution, ubiquitous.

Its subcellular location is the nucleus. The protein localises to the nucleoplasm. The protein resides in the chromosome. The enzyme catalyses [protein]-peptidylproline (omega=180) = [protein]-peptidylproline (omega=0). Probable PPIase that accelerates the folding of proteins. It catalyzes the cis-trans isomerization of proline imidic peptide bonds in oligopeptides. Involved in RNA polymerase II (RNA pol II)-mediated transcription elongation, and in primary transcript splicing, including co-transcriptional trans-splicing, in association with the catalytic subunit of the RNA pol II complex ama-1. Also plays a role in the regulation of elongation-dependent phosphorylation of ama-1 to control transcription. Involved in the transcription of several genes during embryogenesis and in particular, of genes related to developmental processes such as gastrulation, and also regulates transcription in germ cells from embryogenesis to adulthood. This Caenorhabditis elegans protein is Peptidyl-prolyl cis-trans isomerase sig-7.